The primary structure comprises 394 residues: Outer membrane protein S1 (394 aa).

The signal sequence occupies residues 1 to 21; the sequence is MNRKVLALLVPALLVAGAANA. Residues 222-242 are disordered; it reads SSSDRSDNQVARGYGDGMNER.

Belongs to the Gram-negative porin family. As to quaternary structure, homotrimer.

It localises to the cell outer membrane. In terms of biological role, forms pores that allow passive diffusion of small molecules across the outer membrane. The polypeptide is Outer membrane protein S1 (ompS1) (Salmonella typhi).